Consider the following 449-residue polypeptide: Elongation factor 1-alpha (449 aa).

Positions 5 to 230 (KVHINIVVIG…DQINEPKRPS (226 aa)) constitute a tr-type G domain. The segment at 14-21 (GHVDSGKS) is G1. 14–21 (GHVDSGKS) is a binding site for GTP. The residue at position 55 (Lys-55) is an N6,N6-dimethyllysine. The interval 70-74 (GITID) is G2. Lys-79 is subject to N6,N6,N6-trimethyllysine. The interval 91 to 94 (DAPG) is G3. GTP-binding positions include 91–95 (DAPGH) and 153–156 (NKMD). Positions 153 to 156 (NKMD) are G4. At Lys-187 the chain carries N6,N6,N6-trimethyllysine. Residues 194–196 (SGF) are G5. Lys-261 is modified (N6-methyllysine). Glu-289 carries the 5-glutamyl glycerylphosphorylethanolamine modification. An N6,N6,N6-trimethyllysine modification is found at Lys-306. Residue Glu-362 is modified to 5-glutamyl glycerylphosphorylethanolamine. Lys-396 carries the N6,N6,N6-trimethyllysine modification.

Belongs to the TRAFAC class translation factor GTPase superfamily. Classic translation factor GTPase family. EF-Tu/EF-1A subfamily.

The protein localises to the cytoplasm. Functionally, this protein promotes the GTP-dependent binding of aminoacyl-tRNA to the A-site of ribosomes during protein biosynthesis. This Daucus carota (Wild carrot) protein is Elongation factor 1-alpha.